The sequence spans 317 residues: MIKLGIVMDPISSINIKKDSSFAMMLEAQRRGWEIHYMEMNDLHLDQGIAIADTKVVQLKEDPNGWYEFTSEQTIELAELDAVLMRKDPPFDTEYIYATYILERAEEQGTLIVNKPQSLRDCNEKLFTAWFPELTPTTIVTRKAEKIKAFRQEHGDIILKPLDGMGGASIFRVKENDPNVSVIIETLTNHGQNYAMAQTFVPDISNGDKRILVVDGEPMPYCLARIPAKGETRGNLAAGGSGEPRPLSETDLKIANAVAPTLKEKGLIFVGLDVIGDKLTEINVTSPTCIREIEAAFDISITGKLMDAIERRLQAQA.

The 187-residue stretch at E124 to E310 folds into the ATP-grasp domain. F150–G207 contacts ATP. Mg(2+)-binding residues include E281 and N283.

Belongs to the prokaryotic GSH synthase family. It depends on Mg(2+) as a cofactor. The cofactor is Mn(2+).

It catalyses the reaction gamma-L-glutamyl-L-cysteine + glycine + ATP = glutathione + ADP + phosphate + H(+). Its pathway is sulfur metabolism; glutathione biosynthesis; glutathione from L-cysteine and L-glutamate: step 2/2. In Vibrio vulnificus (strain CMCP6), this protein is Glutathione synthetase.